Reading from the N-terminus, the 523-residue chain is Cytochrome P450 52A3-B (523 aa).

A helical membrane pass occupies residues 17 to 34 (WYTILFGAAFTYFLSIAL). Residue C471 participates in heme binding.

It belongs to the cytochrome P450 family. It depends on heme as a cofactor.

The protein localises to the membrane. Functionally, together with an NADPH cytochrome P450 the enzyme system catalyzes the terminal hydroxylation as the first step in the assimilation of alkanes and fatty acids. The polypeptide is Cytochrome P450 52A3-B (CYP52A3-B) (Candida maltosa (Yeast)).